Here is a 347-residue protein sequence, read N- to C-terminus: tRNA dimethylallyltransferase (347 aa).

20 to 27 (GPTASGKT) lines the ATP pocket. 22–27 (TASGKT) is a binding site for substrate. 3 interaction with substrate tRNA regions span residues 45–48 (DSAM), 169–173 (QRLMR), and 275–280 (RCVGYR).

The protein belongs to the IPP transferase family. Monomer. Mg(2+) is required as a cofactor.

The catalysed reaction is adenosine(37) in tRNA + dimethylallyl diphosphate = N(6)-dimethylallyladenosine(37) in tRNA + diphosphate. Catalyzes the transfer of a dimethylallyl group onto the adenine at position 37 in tRNAs that read codons beginning with uridine, leading to the formation of N6-(dimethylallyl)adenosine (i(6)A). The protein is tRNA dimethylallyltransferase of Marinobacter nauticus (strain ATCC 700491 / DSM 11845 / VT8) (Marinobacter aquaeolei).